The following is a 224-amino-acid chain: NADH-quinone oxidoreductase subunit B (224 aa).

The [4Fe-4S] cluster site is built by cysteine 67, cysteine 68, cysteine 133, and cysteine 162. Positions 200–224 are disordered; sequence DMPAEKDRKRGERIKVTNLRTPDEI. Positions 201-224 are enriched in basic and acidic residues; sequence MPAEKDRKRGERIKVTNLRTPDEI.

It belongs to the complex I 20 kDa subunit family. As to quaternary structure, NDH-1 is composed of 14 different subunits. Subunits NuoB, C, D, E, F, and G constitute the peripheral sector of the complex. [4Fe-4S] cluster is required as a cofactor.

The protein localises to the cell inner membrane. It catalyses the reaction a quinone + NADH + 5 H(+)(in) = a quinol + NAD(+) + 4 H(+)(out). In terms of biological role, NDH-1 shuttles electrons from NADH, via FMN and iron-sulfur (Fe-S) centers, to quinones in the respiratory chain. The immediate electron acceptor for the enzyme in this species is believed to be ubiquinone. Couples the redox reaction to proton translocation (for every two electrons transferred, four hydrogen ions are translocated across the cytoplasmic membrane), and thus conserves the redox energy in a proton gradient. This Aeromonas salmonicida (strain A449) protein is NADH-quinone oxidoreductase subunit B.